The chain runs to 555 residues: Glucose-6-phosphate isomerase (555 aa).

Residue E356 is the Proton donor of the active site. Residues H387 and K515 contribute to the active site.

It belongs to the GPI family.

The protein resides in the cytoplasm. The enzyme catalyses alpha-D-glucose 6-phosphate = beta-D-fructose 6-phosphate. Its pathway is carbohydrate biosynthesis; gluconeogenesis. It functions in the pathway carbohydrate degradation; glycolysis; D-glyceraldehyde 3-phosphate and glycerone phosphate from D-glucose: step 2/4. Functionally, catalyzes the reversible isomerization of glucose-6-phosphate to fructose-6-phosphate. This is Glucose-6-phosphate isomerase from Desulforapulum autotrophicum (strain ATCC 43914 / DSM 3382 / VKM B-1955 / HRM2) (Desulfobacterium autotrophicum).